The chain runs to 434 residues: Enolase (434 aa).

Position 166 (Gln166) interacts with (2R)-2-phosphoglycerate. The active-site Proton donor is Glu208. Mg(2+) is bound by residues Asp245, Glu290, and Asp317. The (2R)-2-phosphoglycerate site is built by Lys342, Arg371, Ser372, and Lys393. Lys342 serves as the catalytic Proton acceptor.

The protein belongs to the enolase family. It depends on Mg(2+) as a cofactor.

The protein localises to the cytoplasm. Its subcellular location is the secreted. The protein resides in the cell surface. The enzyme catalyses (2R)-2-phosphoglycerate = phosphoenolpyruvate + H2O. The protein operates within carbohydrate degradation; glycolysis; pyruvate from D-glyceraldehyde 3-phosphate: step 4/5. Catalyzes the reversible conversion of 2-phosphoglycerate (2-PG) into phosphoenolpyruvate (PEP). It is essential for the degradation of carbohydrates via glycolysis. The chain is Enolase from Caldicellulosiruptor saccharolyticus (strain ATCC 43494 / DSM 8903 / Tp8T 6331).